We begin with the raw amino-acid sequence, 272 residues long: Dermonecrotic toxin StSicTox-betaIF1 (272 aa).

The active site involves histidine 5. Residues glutamate 25 and aspartate 27 each contribute to the Mg(2+) site. Histidine 41 functions as the Nucleophile in the catalytic mechanism. Disulfide bonds link cysteine 45/cysteine 51 and cysteine 47/cysteine 189. Aspartate 85 is a Mg(2+) binding site.

Belongs to the arthropod phospholipase D family. Class II subfamily. The cofactor is Mg(2+). As to expression, expressed by the venom gland.

It is found in the secreted. It catalyses the reaction an N-(acyl)-sphingosylphosphocholine = an N-(acyl)-sphingosyl-1,3-cyclic phosphate + choline. It carries out the reaction an N-(acyl)-sphingosylphosphoethanolamine = an N-(acyl)-sphingosyl-1,3-cyclic phosphate + ethanolamine. The catalysed reaction is a 1-acyl-sn-glycero-3-phosphocholine = a 1-acyl-sn-glycero-2,3-cyclic phosphate + choline. The enzyme catalyses a 1-acyl-sn-glycero-3-phosphoethanolamine = a 1-acyl-sn-glycero-2,3-cyclic phosphate + ethanolamine. Its function is as follows. Dermonecrotic toxins cleave the phosphodiester linkage between the phosphate and headgroup of certain phospholipids (sphingolipid and lysolipid substrates), forming an alcohol (often choline) and a cyclic phosphate. This toxin acts on sphingomyelin (SM). It may also act on ceramide phosphoethanolamine (CPE), lysophosphatidylcholine (LPC) and lysophosphatidylethanolamine (LPE), but not on lysophosphatidylserine (LPS), and lysophosphatidylglycerol (LPG). It acts by transphosphatidylation, releasing exclusively cyclic phosphate products as second products. Induces dermonecrosis, hemolysis, increased vascular permeability, edema, inflammatory response, and platelet aggregation. This Sicarius terrosus (Cave spider) protein is Dermonecrotic toxin StSicTox-betaIF1.